Consider the following 251-residue polypeptide: Small ribosomal subunit protein uS2 (251 aa).

It belongs to the universal ribosomal protein uS2 family.

This Deinococcus deserti (strain DSM 17065 / CIP 109153 / LMG 22923 / VCD115) protein is Small ribosomal subunit protein uS2.